The following is a 212-amino-acid chain: Pyridoxine/pyridoxamine 5'-phosphate oxidase (212 aa).

FMN-binding positions include arginine 59–lysine 64, tyrosine 74–serine 75, lysine 81, and glutamine 103. Substrate is bound at residue lysine 64. Substrate contacts are provided by tyrosine 121 and arginine 125. Residues glutamine 138–serine 139 and tryptophan 183 contribute to the FMN site. Arginine 189–histidine 191 lines the substrate pocket. Arginine 193 contributes to the FMN binding site.

The protein belongs to the pyridoxamine 5'-phosphate oxidase family. In terms of assembly, homodimer. The cofactor is FMN.

It catalyses the reaction pyridoxamine 5'-phosphate + O2 + H2O = pyridoxal 5'-phosphate + H2O2 + NH4(+). The catalysed reaction is pyridoxine 5'-phosphate + O2 = pyridoxal 5'-phosphate + H2O2. The protein operates within cofactor metabolism; pyridoxal 5'-phosphate salvage; pyridoxal 5'-phosphate from pyridoxamine 5'-phosphate: step 1/1. Its pathway is cofactor metabolism; pyridoxal 5'-phosphate salvage; pyridoxal 5'-phosphate from pyridoxine 5'-phosphate: step 1/1. Its function is as follows. Catalyzes the oxidation of either pyridoxine 5'-phosphate (PNP) or pyridoxamine 5'-phosphate (PMP) into pyridoxal 5'-phosphate (PLP). The chain is Pyridoxine/pyridoxamine 5'-phosphate oxidase from Rhodopseudomonas palustris (strain TIE-1).